Consider the following 555-residue polypeptide: Potassium-transporting ATPase potassium-binding subunit (555 aa).

The next 10 membrane-spanning stretches (helical) occupy residues 2–22 (IWVAVVITMLLFILVAKPTGI), 60–80 (QYALSLVLLNGFMIVVVYFVF), 130–150 (IGITFLMFAAPATTLALVMAF), 173–193 (VFLPIAFMAALVFVALGVPQT), 246–266 (MSNILQMMLMMLLPTALPFTY), 278–298 (ILFVSLFMVFLLGFITITTSE), 374–394 (AGFVNIIMYAIIAVFISGLMV), 412–432 (LIAVTILFHPLLILGFSALAL), 483–503 (LVMFLGRYFSLITMLAVAASL), and 525–545 (GIFIGTIVIVGALTFFPMLVL).

It belongs to the KdpA family. As to quaternary structure, the system is composed of three essential subunits: KdpA, KdpB and KdpC.

The protein resides in the cell membrane. In terms of biological role, part of the high-affinity ATP-driven potassium transport (or Kdp) system, which catalyzes the hydrolysis of ATP coupled with the electrogenic transport of potassium into the cytoplasm. This subunit binds the extracellular potassium ions and delivers the ions to the membrane domain of KdpB through an intramembrane tunnel. The sequence is that of Potassium-transporting ATPase potassium-binding subunit from Bacillus cereus (strain ATCC 10987 / NRS 248).